The following is a 165-amino-acid chain: Protein SprT (165 aa).

In terms of domain architecture, SprT-like spans 20-163 (EKLTQANLKL…RCVHCGEQLV (144 aa)). His-78 contacts Zn(2+). Glu-79 is an active-site residue. His-82 contacts Zn(2+).

It belongs to the SprT family. Requires Zn(2+) as cofactor.

Its subcellular location is the cytoplasm. In Escherichia coli O139:H28 (strain E24377A / ETEC), this protein is Protein SprT.